We begin with the raw amino-acid sequence, 875 residues long: Protein SEY1 (875 aa).

The Cytoplasmic portion of the chain corresponds to 1-749 (MVANGHFASN…KRSAIGGITQ (749 aa)). The 259-residue stretch at 49–307 (GFNYHLISVF…IPADGFAVYA (259 aa)) folds into the GB1/RHD3-type G domain. 59–66 (GSQSTGKS) lines the GTP pocket. Residues 482–506 (SNYQQELSLYQKDLERISGQLRRDE) adopt a coiled-coil conformation. Residues 676 to 704 (LDKWIGHTPSSATPADEEDLTPIGGVDED) form a disordered region. The span at 690 to 704 (ADEEDLTPIGGVDED) shows a compositional bias: acidic residues. A helical transmembrane segment spans residues 750–770 (VPLYFYGLLLALGWNEIMAVL). The Lumenal segment spans residues 771–773 (RNP). A helical transmembrane segment spans residues 774-794 (AYFFLLFVCAIGAYVTYQLNL). Topologically, residues 795-875 (WGPIIKMTEA…ADDDDVDDDF (81 aa)) are cytoplasmic. Residues 831 to 875 (MAMSGARNATEEHEMSNLNRKSGERGGQKYRGEDVADDDDVDDDF) are disordered. Over residues 839–864 (ATEEHEMSNLNRKSGERGGQKYRGED) the composition is skewed to basic and acidic residues. Residues 865 to 875 (VADDDDVDDDF) are compositionally biased toward acidic residues.

The protein belongs to the TRAFAC class dynamin-like GTPase superfamily. GB1/RHD3 GTPase family. RHD3 subfamily.

The protein resides in the endoplasmic reticulum membrane. Cooperates with the reticulon proteins and tubule-shaping DP1 family proteins to generate and maintain the structure of the tubular endoplasmic reticulum network. Has GTPase activity, which is required for its function in ER organization. The chain is Protein SEY1 from Ajellomyces dermatitidis (strain ER-3 / ATCC MYA-2586) (Blastomyces dermatitidis).